The following is a 133-amino-acid chain: Holo-[acyl-carrier-protein] synthase (133 aa).

Mg(2+)-binding residues include aspartate 8 and glutamate 56.

Belongs to the P-Pant transferase superfamily. AcpS family. Mg(2+) is required as a cofactor.

The protein resides in the cytoplasm. It catalyses the reaction apo-[ACP] + CoA = holo-[ACP] + adenosine 3',5'-bisphosphate + H(+). Its function is as follows. Transfers the 4'-phosphopantetheine moiety from coenzyme A to a Ser of acyl-carrier-protein. This chain is Holo-[acyl-carrier-protein] synthase, found in Deinococcus radiodurans (strain ATCC 13939 / DSM 20539 / JCM 16871 / CCUG 27074 / LMG 4051 / NBRC 15346 / NCIMB 9279 / VKM B-1422 / R1).